The primary structure comprises 255 residues: 5'-nucleotidase SurE (255 aa).

The a divalent metal cation site is built by Asp11, Asp12, Ser43, and Asn99.

This sequence belongs to the SurE nucleotidase family. It depends on a divalent metal cation as a cofactor.

It is found in the cytoplasm. It catalyses the reaction a ribonucleoside 5'-phosphate + H2O = a ribonucleoside + phosphate. Its function is as follows. Nucleotidase that shows phosphatase activity on nucleoside 5'-monophosphates. This Caldanaerobacter subterraneus subsp. tengcongensis (strain DSM 15242 / JCM 11007 / NBRC 100824 / MB4) (Thermoanaerobacter tengcongensis) protein is 5'-nucleotidase SurE.